The primary structure comprises 185 residues: Ribosome-recycling factor (185 aa).

It belongs to the RRF family.

The protein resides in the cytoplasm. Its function is as follows. Responsible for the release of ribosomes from messenger RNA at the termination of protein biosynthesis. May increase the efficiency of translation by recycling ribosomes from one round of translation to another. This is Ribosome-recycling factor from Wolbachia pipientis subsp. Culex pipiens (strain wPip).